The chain runs to 131 residues: Holo-[acyl-carrier-protein] synthase (131 aa).

The Mg(2+) site is built by aspartate 8 and glutamate 59.

The protein belongs to the P-Pant transferase superfamily. AcpS family. The cofactor is Mg(2+).

It localises to the cytoplasm. The catalysed reaction is apo-[ACP] + CoA = holo-[ACP] + adenosine 3',5'-bisphosphate + H(+). In terms of biological role, transfers the 4'-phosphopantetheine moiety from coenzyme A to a Ser of acyl-carrier-protein. In Paramagnetospirillum magneticum (strain ATCC 700264 / AMB-1) (Magnetospirillum magneticum), this protein is Holo-[acyl-carrier-protein] synthase.